Here is a 176-residue protein sequence, read N- to C-terminus: Transcription termination/antitermination protein NusG (176 aa).

Positions 125 to 149 (GEVVRVVEGPFANFTATVEEYDVEH) constitute a KOW domain.

The protein belongs to the NusG family.

Its function is as follows. Participates in transcription elongation, termination and antitermination. The polypeptide is Transcription termination/antitermination protein NusG (Helicobacter pylori (strain ATCC 700392 / 26695) (Campylobacter pylori)).